The chain runs to 115 residues: UPF0738 protein SACOL1009 (115 aa).

It belongs to the UPF0738 family.

The polypeptide is UPF0738 protein SACOL1009 (Staphylococcus aureus (strain COL)).